The chain runs to 290 residues: ATP synthase gamma chain (290 aa).

The protein belongs to the ATPase gamma chain family. F-type ATPases have 2 components, CF(1) - the catalytic core - and CF(0) - the membrane proton channel. CF(1) has five subunits: alpha(3), beta(3), gamma(1), delta(1), epsilon(1). CF(0) has three main subunits: a, b and c.

It is found in the cell membrane. Produces ATP from ADP in the presence of a proton gradient across the membrane. The gamma chain is believed to be important in regulating ATPase activity and the flow of protons through the CF(0) complex. This Akkermansia muciniphila (strain ATCC BAA-835 / DSM 22959 / JCM 33894 / BCRC 81048 / CCUG 64013 / CIP 107961 / Muc) protein is ATP synthase gamma chain.